Consider the following 152-residue polypeptide: Large ribosomal subunit protein bL9 (152 aa).

This sequence belongs to the bacterial ribosomal protein bL9 family.

Binds to the 23S rRNA. The polypeptide is Large ribosomal subunit protein bL9 (Trichormus variabilis (strain ATCC 29413 / PCC 7937) (Anabaena variabilis)).